Consider the following 807-residue polypeptide: Glycerol-3-phosphate acyltransferase (807 aa).

The HXXXXD motif motif lies at 308-313; sequence CHRSHM.

This sequence belongs to the GPAT/DAPAT family.

The protein resides in the cell inner membrane. It catalyses the reaction sn-glycerol 3-phosphate + an acyl-CoA = a 1-acyl-sn-glycero-3-phosphate + CoA. It functions in the pathway phospholipid metabolism; CDP-diacylglycerol biosynthesis; CDP-diacylglycerol from sn-glycerol 3-phosphate: step 1/3. The protein is Glycerol-3-phosphate acyltransferase of Shewanella halifaxensis (strain HAW-EB4).